The primary structure comprises 931 residues: Phosphoenolpyruvate carboxylase (931 aa).

Residues His-138 and Lys-594 contribute to the active site.

It belongs to the PEPCase type 1 family. It depends on Mg(2+) as a cofactor.

It carries out the reaction oxaloacetate + phosphate = phosphoenolpyruvate + hydrogencarbonate. In terms of biological role, forms oxaloacetate, a four-carbon dicarboxylic acid source for the tricarboxylic acid cycle. The protein is Phosphoenolpyruvate carboxylase of Streptococcus agalactiae serotype Ia (strain ATCC 27591 / A909 / CDC SS700).